We begin with the raw amino-acid sequence, 853 residues long: Leucine--tRNA ligase (853 aa).

Residues 40 to 50 (PYPSGKMHMGH) carry the 'HIGH' region motif. A 'KMSKS' region motif is present at residues 609–613 (KMSKS). Lysine 612 serves as a coordination point for ATP.

Belongs to the class-I aminoacyl-tRNA synthetase family.

It localises to the cytoplasm. It catalyses the reaction tRNA(Leu) + L-leucine + ATP = L-leucyl-tRNA(Leu) + AMP + diphosphate. The chain is Leucine--tRNA ligase from Brachyspira hyodysenteriae (strain ATCC 49526 / WA1).